The chain runs to 408 residues: Prenyltransferase criF (408 aa).

Dimethylallyl diphosphate-binding residues include Arg-94, Lys-181, Tyr-183, Arg-248, Lys-250, Tyr-252, Gln-334, Tyr-336, Tyr-400, and Tyr-404.

This sequence belongs to the tryptophan dimethylallyltransferase family. In terms of assembly, homodimer.

It catalyses the reaction preechinulin + dimethylallyl diphosphate = tardioxopiperazine B + diphosphate. The enzyme catalyses preechinulin + dimethylallyl diphosphate = tardioxopiperazine A + diphosphate. It carries out the reaction tardioxopiperazine A + dimethylallyl diphosphate = echinulin + diphosphate. The catalysed reaction is tardioxopiperazine A + dimethylallyl diphosphate = variecolorin L + diphosphate. It catalyses the reaction neoechinulin A + dimethylallyl diphosphate = variecolorin G + diphosphate. The enzyme catalyses neoechinulin A + dimethylallyl diphosphate = isoechinulin A + diphosphate. It carries out the reaction isoechinulin A + dimethylallyl diphosphate = dehydroechinulin + diphosphate. The catalysed reaction is neoechinulin B + dimethylallyl diphosphate = isoechinulin B + diphosphate. It functions in the pathway secondary metabolite biosynthesis. It participates in alkaloid biosynthesis. Prenyltransferase; part of the gene cluster that mediates the biosynthesis of echinulin family alkaloid. The pathway begins with the biosynthesis of the cyclic dipeptide cyclo-L-Trp-L-Ala (cyclo-TA) by the NRPS criC via condensation of L-alanine and L-tryptophan. The prenyltransferase criA then catalyzes the first prenylation step, a reverse prenylation reaction at C2, to yield preechinulin. Preechinulin is the substrate of the cytochrome P450 monooxygenase criE that catalyzes the formation of the double bond between C10 and C11 to produce neoechulin A. The unique prenyltransferase criF functions as a competitive enzyme with criE for preechinulin metabolization and uses preechinulin for effective regiospecific prenylations. Preechinulin is prenylated by criF at C5 or C7. C7-prenylation leads to accumulation of tardioxopiperazine B without further modification by criF. In contrast, the C5-prenylated tardioxopiperazine A can be prenylated again by criF, predominantly at C7 to form echinulin or less frequently at C4 to give variecolorin L. CriF also accepts neoechilunin A to produce varlecolorin G (prenylation at C5) or isoechinulin A (prenylation at C7). CriF further converts isoechinulin A into dehydroechinulin. Moreover, a yet unidentified enzyme can also convert neoechilunin A into neoechilunin B by introducing a double bond between positions C14 and C17 and thus provides a further substrate to criF for C5 and C7 prenylation. This is Prenyltransferase criF from Aspergillus cristatus (Chinese Fuzhuan brick tea-fermentation fungus).